A 380-amino-acid chain; its full sequence is MASRDSLGEVFRVSIFGESHGPGVGALVTGVPPGLEVDEAYINRELERRRPGGPYASPRREADRVEILSGVFRGRTTGAPILLFIRNVDVKPGFYEEFRYKPRPGHADYVAYERYLGHQDYRGGGIFSGRRTAALVAAGAIAKLVLARYGVRVYAYVKSIGGVEARVEPRDSEEFRRAIDRDPLKCPDPEASERMRRLVEEARREGDSLGSVVEAVAFNVPPGLGDPPLGGVDALLARAVMAIPAAKAVEFGEGFALAFMRGSEAHDSPRAVGGRIVHETNRSGGIVGGLTNGMPIVFRVAFKPPSSIPKPRRTVDLRSLGEAWVSGKGRHDPVIGPRAAPVVEAVTAIVLADLLLLREALLPEWVEDLRPWTRGEAGGD.

Position 49 (Arg49) interacts with NADP(+). FMN-binding positions include Gly288, 303–307 (KPPSS), and Arg330.

Belongs to the chorismate synthase family. It depends on FMNH2 as a cofactor.

It catalyses the reaction 5-O-(1-carboxyvinyl)-3-phosphoshikimate = chorismate + phosphate. The protein operates within metabolic intermediate biosynthesis; chorismate biosynthesis; chorismate from D-erythrose 4-phosphate and phosphoenolpyruvate: step 7/7. Functionally, catalyzes the anti-1,4-elimination of the C-3 phosphate and the C-6 proR hydrogen from 5-enolpyruvylshikimate-3-phosphate (EPSP) to yield chorismate, which is the branch point compound that serves as the starting substrate for the three terminal pathways of aromatic amino acid biosynthesis. This reaction introduces a second double bond into the aromatic ring system. The sequence is that of Chorismate synthase from Aeropyrum pernix (strain ATCC 700893 / DSM 11879 / JCM 9820 / NBRC 100138 / K1).